We begin with the raw amino-acid sequence, 83 residues long: Small ribosomal subunit protein bS20 (83 aa).

Residues 1–11 (MANHKSAAKRA) are compositionally biased toward basic residues. Residues 1 to 44 (MANHKSAAKRAKQSEARRLRNKSTRSSMNTAVKKVRTAKEAGTD) are disordered.

Belongs to the bacterial ribosomal protein bS20 family.

Binds directly to 16S ribosomal RNA. This is Small ribosomal subunit protein bS20 from Desulforapulum autotrophicum (strain ATCC 43914 / DSM 3382 / VKM B-1955 / HRM2) (Desulfobacterium autotrophicum).